We begin with the raw amino-acid sequence, 338 residues long: 4-hydroxythreonine-4-phosphate dehydrogenase (338 aa).

Residues His136 and Thr137 each contribute to the substrate site. 3 residues coordinate a divalent metal cation: His173, His218, and His273. Substrate-binding residues include Lys281, Asn290, and Arg299.

The protein belongs to the PdxA family. In terms of assembly, homodimer. The cofactor is Zn(2+). Requires Mg(2+) as cofactor. Co(2+) is required as a cofactor.

The protein resides in the cytoplasm. The enzyme catalyses 4-(phosphooxy)-L-threonine + NAD(+) = 3-amino-2-oxopropyl phosphate + CO2 + NADH. It participates in cofactor biosynthesis; pyridoxine 5'-phosphate biosynthesis; pyridoxine 5'-phosphate from D-erythrose 4-phosphate: step 4/5. Catalyzes the NAD(P)-dependent oxidation of 4-(phosphooxy)-L-threonine (HTP) into 2-amino-3-oxo-4-(phosphooxy)butyric acid which spontaneously decarboxylates to form 3-amino-2-oxopropyl phosphate (AHAP). This chain is 4-hydroxythreonine-4-phosphate dehydrogenase, found in Ralstonia nicotianae (strain ATCC BAA-1114 / GMI1000) (Ralstonia solanacearum).